The primary structure comprises 418 residues: Sprouty-related, EVH1 domain-containing protein 2 (418 aa).

Residues 5 to 122 (THPDDDSYIV…RGVRKAIEDL (118 aa)) form the WH1 domain. The segment at 127-172 (TTSSSTIHNEAELGDDDVFTTATDSSSNSSQKREQPTRTVSSPTSC) is disordered. The segment covering 146–156 (TTATDSSSNSS) has biased composition (polar residues). Residues 201–257 (PYRQVSFPDDDEEIVRINPREKIWMTGYEDYRHAPVRGKYPDPSEDVDSSYVRFAKG) form the KBD domain. S206 is subject to Phosphoserine. A phosphotyrosine mark is found at Y228 and Y231. The disordered stretch occupies residues 275–302 (GLGEDPKGRGGSVIKTQPSRGKSRRRKE). Positions 308–416 (RCVYCRDMFN…CRCCGGKHKA (109 aa)) constitute an SPR domain.

As to quaternary structure, homodimer and heterodimer. Able to interact with SPRED1 to form heterodimers. Interacts with RAS. May interact with ZDHHC13 (via ANK repeats) and ZDHHC17 (via ANK repeats). Interacts with TESK1. Interacts with NF1. In terms of processing, phosphorylated on serine and threonine residues. Phosphorylated on tyrosine. Phosphorylation of Tyr-228 and Tyr-231 are required for ubiquitination. Ubiquitinated; leading to degradation by the proteasome.

The protein resides in the cell membrane. It localises to the cytoplasmic vesicle. The protein localises to the secretory vesicle membrane. Its subcellular location is the cytoplasm. In terms of biological role, negatively regulates Ras signaling pathways and downstream activation of MAP kinases. Recruits and translocates NF1 to the cell membrane, thereby enabling NF1-dependent hydrolysis of active GTP-bound Ras to inactive GDP-bound Ras. Inhibits fibroblast growth factor (FGF)-induced retinal lens fiber differentiation, probably by inhibiting FGF-mediated phosphorylation of ERK1/2. Inhibits TGFB-induced epithelial-to-mesenchymal transition in lens epithelial cells. This Pongo abelii (Sumatran orangutan) protein is Sprouty-related, EVH1 domain-containing protein 2 (SPRED2).